We begin with the raw amino-acid sequence, 135 residues long: MLSPKRTRFRKQHRGRMKGISYRGNRICFGRYALQALEPAWITSRQIEAGRRAMARYARRGGKIWVRIFPDKPVTVRPAETRMGSGKGSPEYWVSVVKPGRILYEIGGISETVARAAISIAASKMPIRTQFVIAG.

Belongs to the universal ribosomal protein uL16 family. As to quaternary structure, part of the 50S ribosomal subunit.

Its subcellular location is the plastid. It localises to the chloroplast. The chain is Large ribosomal subunit protein uL16c from Piper cenocladum (Ant piper).